Here is a 175-residue protein sequence, read N- to C-terminus: Ferritin light chain (175 aa).

S2 is modified (N-acetylserine). In terms of domain architecture, Ferritin-like diiron spans 7 to 156; sequence QNYSTEVEAA…DHLTNIQRLV (150 aa). The Fe cation site is built by E54, E57, E58, E61, and E64. The tract at residues 54–61 is catalytic site for iron oxidation; that stretch reads ELAEEKRE.

Belongs to the ferritin family. In terms of assembly, oligomer of 24 subunits. There are two types of subunits: L (light) chain and H (heavy) chain. The major chain can be light or heavy, depending on the species and tissue type. The functional molecule forms a roughly spherical shell with a diameter of 12 nm and contains a central cavity into which the insoluble mineral iron core is deposited. Interacts with NCOA4.

It localises to the cytoplasmic vesicle. It is found in the autophagosome. Its subcellular location is the cytoplasm. The protein localises to the autolysosome. Stores iron in a soluble, non-toxic, readily available form. Important for iron homeostasis. Iron is taken up in the ferrous form and deposited as ferric hydroxides after oxidation. Also plays a role in delivery of iron to cells. Mediates iron uptake in capsule cells of the developing kidney. Delivery to lysosomes by the cargo receptor NCOA4 for autophagic degradation and release or iron. The protein is Ferritin light chain (FTL) of Equus caballus (Horse).